We begin with the raw amino-acid sequence, 577 residues long: MNIQALLSEKVRQAMIAAGAPADCEPQVRQSAKVQFGDYQANGMMAVAKKLGMAPRQLAEQVLTHLDLNGIASKVEIAGPGFINIFLDPAFLAEHVQQALASDRLGVATPEKQTIVVDYSAPNVAKEMHVGHLRSTIIGDAAVRTLEFLGHKVIRANHVGDWGTQFGMLIAWLEKQQQENAGEMELADLEGFYRDAKKHYDEDEEFAERARNYVVKLQSGDEYFREMWRKLVDITMTQNQITYDRLNVTLTHDDVMGESLYNPMLPGIVADLKAKGLAVESEGATVVFLDEFKNKEGEPMGVIIQKKDGGYLYTTTDIACAKYRYETLHADRVLYYIDSRQHQHLMQAWAIVRKAGYVPESVPLEHHMFGMMLGKDGKPFKTRAGGTVKLADLLDEALERARRLVAEKNPDMPADELEKLANAVGIGAVKYADLSKNRTTDYIFDWDNMLAFEGNTAPYMQYAYTRVLSVFRKAEIDEEQLAAAPVIIREDREAQLAARLLQFEETLTVVAREGTPHVMCAYLYDLAGLFSGFYEHCPILSAENEEVRNSRLKLAQLTAKTLKLGLDTLGIETVERM.

A 'HIGH' region motif is present at residues 122–132; the sequence is PNVAKEMHVGH.

This sequence belongs to the class-I aminoacyl-tRNA synthetase family. In terms of assembly, monomer.

It is found in the cytoplasm. It catalyses the reaction tRNA(Arg) + L-arginine + ATP = L-arginyl-tRNA(Arg) + AMP + diphosphate. This is Arginine--tRNA ligase from Escherichia coli O157:H7 (strain EC4115 / EHEC).